A 530-amino-acid chain; its full sequence is Phosphoenolpyruvate carboxykinase (ATP) (530 aa).

Substrate contacts are provided by Arg-58, Tyr-195, and Lys-201. ATP contacts are provided by residues Lys-201, His-220, and 236–244 (GLSGTGKTT). Positions 201 and 220 each coordinate Mn(2+). Asp-257 is a Mn(2+) binding site. ATP-binding positions include Glu-285, Arg-321, 440–441 (RI), and Thr-446. Arg-321 is a substrate binding site.

Belongs to the phosphoenolpyruvate carboxykinase (ATP) family. Mn(2+) serves as cofactor.

The protein localises to the cytoplasm. The enzyme catalyses oxaloacetate + ATP = phosphoenolpyruvate + ADP + CO2. The protein operates within carbohydrate biosynthesis; gluconeogenesis. Its function is as follows. Involved in the gluconeogenesis. Catalyzes the conversion of oxaloacetate (OAA) to phosphoenolpyruvate (PEP) through direct phosphoryl transfer between the nucleoside triphosphate and OAA. This Staphylococcus aureus (strain bovine RF122 / ET3-1) protein is Phosphoenolpyruvate carboxykinase (ATP).